A 205-amino-acid polypeptide reads, in one-letter code: Small ribosomal subunit protein uS2 (205 aa).

Belongs to the universal ribosomal protein uS2 family.

This is Small ribosomal subunit protein uS2 from Methanoculleus marisnigri (strain ATCC 35101 / DSM 1498 / JR1).